The primary structure comprises 209 residues: MAENERMYISYNNIHKLCQGVAKHILARNERPDIIIAITGGGMIPARIIRSFLKTKGQKNIPIQAIGLSLYEDLGLDNSVETIGKEVIRTQWLDFGALNQHFDSLIGKKVLIVDEVDDTRTTLHYAVSELEKEIAEQQKVLNRMSEETVISIFVLHNKDKPKRAGLPDSMMNSGRYIAAQTVPDKWLCYPWDAEDIEEHTMLAKAQGHD.

A Phosphoserine modification is found at Ser-79.

Its subcellular location is the cytoplasm. In terms of biological role, may act as a xanthine phosphoribosyltransferase involved in the synthesis of purine nucleotides. Such activity is however unclear in vivo. This is Xanthine phosphoribosyltransferase 1 (XPT1) from Saccharomyces cerevisiae (strain ATCC 204508 / S288c) (Baker's yeast).